The primary structure comprises 603 residues: NADPH-dependent diflavin oxidoreductase 1 (603 aa).

One can recognise a Flavodoxin-like domain in the interval 8–152 (VLVLYGSETG…SFVRWTGRLY (145 aa)). FMN contacts are provided by residues 14–19 (SETGNA), 61–64 (STTG), 99–108 (LGDSTYLKFN), and E134. The 248-residue stretch at 210-457 (PDGWTATLVG…RKPVLSPIHG (248 aa)) folds into the FAD-binding FR-type domain. Residues R358, 388 to 391 (RDFS), and 429 to 432 (GLCS) contribute to the FAD site. NADP(+) is bound by residues T472, 528-529 (SR), and 534-538 (KIYVQ). Residue W603 coordinates FAD.

It belongs to the NADPH-dependent diflavin oxidoreductase NDOR1 family. In the N-terminal section; belongs to the flavodoxin family. This sequence in the C-terminal section; belongs to the flavoprotein pyridine nucleotide cytochrome reductase family. In terms of assembly, interacts with DRE2; as part of the cytosolic iron-sulfur (Fe-S) protein assembly (CIA) machinery. FAD serves as cofactor. It depends on FMN as a cofactor.

It is found in the cytoplasm. The protein resides in the mitochondrion. It carries out the reaction 2 oxidized [2Fe-2S]-[protein] + NADPH = 2 reduced [2Fe-2S]-[protein] + NADP(+) + H(+). NADPH-dependent reductase which is a central component of the cytosolic iron-sulfur (Fe-S) protein assembly (CIA) machinery. Transfers electrons from NADPH via its FAD and FMN prosthetic groups to the [2Fe-2S] cluster of DRE2, another key component of the CIA machinery. In turn, this reduced cluster provides electrons for assembly of cytosolic iron-sulfur cluster proteins. Positively controls H(2)O(2)-induced cell death. The protein is NADPH-dependent diflavin oxidoreductase 1 of Gibberella zeae (strain ATCC MYA-4620 / CBS 123657 / FGSC 9075 / NRRL 31084 / PH-1) (Wheat head blight fungus).